We begin with the raw amino-acid sequence, 458 residues long: Exodeoxyribonuclease 7 large subunit (458 aa).

This sequence belongs to the XseA family. As to quaternary structure, heterooligomer composed of large and small subunits.

The protein localises to the cytoplasm. It carries out the reaction Exonucleolytic cleavage in either 5'- to 3'- or 3'- to 5'-direction to yield nucleoside 5'-phosphates.. In terms of biological role, bidirectionally degrades single-stranded DNA into large acid-insoluble oligonucleotides, which are then degraded further into small acid-soluble oligonucleotides. This is Exodeoxyribonuclease 7 large subunit from Yersinia enterocolitica serotype O:8 / biotype 1B (strain NCTC 13174 / 8081).